The following is a 611-amino-acid chain: Nuclear cap-binding protein subunit 3 (611 aa).

The tract at residues 1 to 44 (MAAVRGLRVSVKAGGGAEPEPMEVEEGEVEAAADRASPREVVSG) is disordered. Residues 20-31 (EPMEVEEGEVEA) are compositionally biased toward acidic residues. The segment at 108–169 (ETLYVYGVDD…LSSMPTNEKG (62 aa)) is RNA recognition motif (RRM) domain. Positions 137–140 (WLDD) match the WLDD motif; essential for 7-methylguanosine-containing mRNA cap binding motif. Disordered regions lie at residues 159-230 (NLSS…PDTL), 338-360 (EEPI…DDRV), 373-393 (RERE…EMDY), 423-568 (KTIR…DSVL), and 583-611 (RQKK…DTDS). Residues 168-179 (KGQRKKDGEHSS) show a composition bias toward basic and acidic residues. Acidic residues-rich tracts occupy residues 196 to 218 (DETE…DETE) and 339 to 358 (EPIE…DEDD). Over residues 423–439 (KTIRNSMRSDSVGNSVK) the composition is skewed to polar residues. Over residues 446–463 (SHAEKPADVRLILEEKRQ) the composition is skewed to basic and acidic residues. Residues 464–475 (STASRQQSSSGK) are compositionally biased toward low complexity. Basic and acidic residues-rich tracts occupy residues 501-511 (SRREPLSDVHS) and 544-556 (PKDK…KSEK). The segment covering 602–611 (ESSSGSDTDS) has biased composition (low complexity).

This sequence belongs to the NCBP3 family. In terms of assembly, component of an alternative cap-binding complex (CBC) composed of NCBP1/CBP80 and NCBP3.

The protein resides in the nucleus. It is found in the cytoplasm. Its function is as follows. Associates with NCBP1/CBP80 to form an alternative cap-binding complex (CBC) which plays a key role in mRNA export. NCBP3 serves as adapter protein linking the capped RNAs (m7GpppG-capped RNA) to NCBP1/CBP80. Unlike the conventional CBC with NCBP2 which binds both small nuclear RNA (snRNA) and messenger (mRNA) and is involved in their export from the nucleus, the alternative CBC with NCBP3 does not bind snRNA and associates only with mRNA thereby playing a role in only mRNA export. This is Nuclear cap-binding protein subunit 3 from Xenopus tropicalis (Western clawed frog).